A 172-amino-acid polypeptide reads, in one-letter code: UPF0398 protein gbs0290 (172 aa).

Belongs to the UPF0398 family.

The chain is UPF0398 protein gbs0290 from Streptococcus agalactiae serotype III (strain NEM316).